The chain runs to 486 residues: UDP-N-acetylmuramoyl-L-alanyl-D-glutamate--2,6-diaminopimelate ligase (486 aa).

UDP-N-acetyl-alpha-D-muramoyl-L-alanyl-D-glutamate is bound at residue serine 30. 111–117 contacts ATP; it reads GTNGKTT. UDP-N-acetyl-alpha-D-muramoyl-L-alanyl-D-glutamate contacts are provided by residues 153-154, serine 180, glutamine 186, and arginine 188; that span reads TT. Residue lysine 220 is modified to N6-carboxylysine. Meso-2,6-diaminopimelate contacts are provided by residues arginine 378, 402–405, glycine 455, and glutamate 459; that span reads DNPR. The Meso-diaminopimelate recognition motif motif lies at 402 to 405; the sequence is DNPR.

This sequence belongs to the MurCDEF family. MurE subfamily. Requires Mg(2+) as cofactor. Carboxylation is probably crucial for Mg(2+) binding and, consequently, for the gamma-phosphate positioning of ATP.

Its subcellular location is the cytoplasm. The catalysed reaction is UDP-N-acetyl-alpha-D-muramoyl-L-alanyl-D-glutamate + meso-2,6-diaminopimelate + ATP = UDP-N-acetyl-alpha-D-muramoyl-L-alanyl-gamma-D-glutamyl-meso-2,6-diaminopimelate + ADP + phosphate + H(+). It functions in the pathway cell wall biogenesis; peptidoglycan biosynthesis. Catalyzes the addition of meso-diaminopimelic acid to the nucleotide precursor UDP-N-acetylmuramoyl-L-alanyl-D-glutamate (UMAG) in the biosynthesis of bacterial cell-wall peptidoglycan. The sequence is that of UDP-N-acetylmuramoyl-L-alanyl-D-glutamate--2,6-diaminopimelate ligase from Parabacteroides distasonis (strain ATCC 8503 / DSM 20701 / CIP 104284 / JCM 5825 / NCTC 11152).